Here is a 338-residue protein sequence, read N- to C-terminus: Anthranilate phosphoribosyltransferase (338 aa).

5-phospho-alpha-D-ribose 1-diphosphate contacts are provided by residues Gly-78, Gly-81–Asp-82, Ser-86, Asn-88–Thr-91, Lys-106–Ser-114, and Ser-118. Residue Gly-78 participates in anthranilate binding. Residue Ser-90 coordinates Mg(2+). Residue Asn-109 coordinates anthranilate. Arg-163 is an anthranilate binding site. Mg(2+)-binding residues include Asp-222 and Glu-223.

The protein belongs to the anthranilate phosphoribosyltransferase family. Homodimer. Requires Mg(2+) as cofactor.

The catalysed reaction is N-(5-phospho-beta-D-ribosyl)anthranilate + diphosphate = 5-phospho-alpha-D-ribose 1-diphosphate + anthranilate. It participates in amino-acid biosynthesis; L-tryptophan biosynthesis; L-tryptophan from chorismate: step 2/5. Catalyzes the transfer of the phosphoribosyl group of 5-phosphorylribose-1-pyrophosphate (PRPP) to anthranilate to yield N-(5'-phosphoribosyl)-anthranilate (PRA). This chain is Anthranilate phosphoribosyltransferase, found in Staphylococcus saprophyticus subsp. saprophyticus (strain ATCC 15305 / DSM 20229 / NCIMB 8711 / NCTC 7292 / S-41).